A 246-amino-acid chain; its full sequence is Ribonuclease PH (246 aa).

Phosphate is bound by residues Arg95 and 133-135 (GTR).

The protein belongs to the RNase PH family. As to quaternary structure, homohexameric ring arranged as a trimer of dimers.

It catalyses the reaction tRNA(n+1) + phosphate = tRNA(n) + a ribonucleoside 5'-diphosphate. Phosphorolytic 3'-5' exoribonuclease that plays an important role in tRNA 3'-end maturation. Removes nucleotide residues following the 3'-CCA terminus of tRNAs; can also add nucleotides to the ends of RNA molecules by using nucleoside diphosphates as substrates, but this may not be physiologically important. Probably plays a role in initiation of 16S rRNA degradation (leading to ribosome degradation) during starvation. The sequence is that of Ribonuclease PH from Bordetella bronchiseptica (strain ATCC BAA-588 / NCTC 13252 / RB50) (Alcaligenes bronchisepticus).